Here is a 466-residue protein sequence, read N- to C-terminus: MSHPGWIMVSFLTELLSQSSKGIAQSLDNCANDTEIINALLKDSYNKHYIPSHPTHVRVDMWVQEVTSVSELTQDFEIDLYINEFWEDPALVYEDMNPCKRNISFDDKVLQRLWLPNTCFINSKSAAIHESPFKNVFLMVFSNGTLWTNYRMKLTGPCDMKLKRFPFDKQKCYLTFESFNYNTGEVRMQWNQPYPVILLKRIELPDFKLVNFSVIAVEQMYPAGWWDELTVAFVFERRYGWYVLQGYIPTMVTIVISWISFYLGPRAIPARTMLGVNSLLAMTFQFGNIIRNLPRVSYVKAIDVWMLSGMLFIFLSLLELAVVGFMSRNEGLPPKVKKRKRQEDDDEGFSWKSMQTSPHLELRQFWVDKRVNSLRNDSAVPPVEDYAPMELEQPYQNITKRREKRKWMSGLRKKWRAMRELRPETVDFYSAIFFPTAYMLFNISYWSFYLTSLSEYFDEDVNIDQP.

The N-terminal stretch at 1-24 is a signal peptide; sequence MSHPGWIMVSFLTELLSQSSKGIA. Topologically, residues 25 to 242 are extracellular; the sequence is QSLDNCANDT…FVFERRYGWY (218 aa). N-linked (GlcNAc...) asparagine glycans are attached at residues N32, N102, and N143. C158 and C172 are joined by a disulfide. N-linked (GlcNAc...) asparagine glycosylation is present at N211. Residues 243–263 traverse the membrane as a helical segment; the sequence is VLQGYIPTMVTIVISWISFYL. Residues 264–272 are Cytoplasmic-facing; that stretch reads GPRAIPART. Residues 273-290 traverse the membrane as a helical segment; that stretch reads MLGVNSLLAMTFQFGNII. The Extracellular segment spans residues 291–304; that stretch reads RNLPRVSYVKAIDV. Residues 305-325 traverse the membrane as a helical segment; the sequence is WMLSGMLFIFLSLLELAVVGF. At 326–427 the chain is on the cytoplasmic side; the sequence is MSRNEGLPPK…MRELRPETVD (102 aa). Residues 333 to 352 are disordered; it reads PPKVKKRKRQEDDDEGFSWK. The helical transmembrane segment at 428-448 threads the bilayer; that stretch reads FYSAIFFPTAYMLFNISYWSF. Over 449-466 the chain is Extracellular; the sequence is YLTSLSEYFDEDVNIDQP.

Belongs to the ligand-gated ion channel (TC 1.A.9) family. Homopentamer (in vitro). Forms heteropentamers composed of acc-1 and acc-4 or acc-1 and acc-3. Both homopentamers and heteropentamers form functional ion channels. As to expression, expressed in a subset of cholinergic motor neurons including cholinergic motor neurons in the ventral cord, the retrovesicular ganglion and in head neurons such as the SMD, RMD motor neurons, the AVA and AVE command interneurons and the SAA neurons. Also expressed in a small number of glutamatergic neurons including the pharyngeal neurons MI and M3, the PLM neurons and a pair of neurons in the lateral ganglion.

Its subcellular location is the cell membrane. Acetylcholine-gated chloride channel subunit. Forms functional homopentameric (in vitro) and functional heteropentameric ion channels with acc-3 and acc-4 ion channel subunits. Currents in channels are triggered in response to acetylcholine, but not in response to GABA, glutamate, glycine, histamine or dopamine. In Caenorhabditis elegans, this protein is Acetylcholine-gated chloride channel subunit acc-1.